A 126-amino-acid polypeptide reads, in one-letter code: Histone H2B (126 aa).

Low complexity predominate over residues 1–12; the sequence is MPEPAKSAPAPK. The interval 1 to 36 is disordered; the sequence is MPEPAKSAPAPKKGSKKAVTKTQKKGDKKRKKSRKE. 2 positions are modified to N6-acetyllysine: Lys-6 and Lys-13. The span at 13–34 shows a compositional bias: basic residues; the sequence is KGSKKAVTKTQKKGDKKRKKSR. Position 15 is a phosphoserine (Ser-15). 2 positions are modified to N6-acetyllysine: Lys-16 and Lys-21. Residue Lys-121 forms a Glycyl lysine isopeptide (Lys-Gly) (interchain with G-Cter in ubiquitin) linkage.

The protein belongs to the histone H2B family. As to quaternary structure, the nucleosome is a histone octamer containing two molecules each of H2A, H2B, H3 and H4 assembled in one H3-H4 heterotetramer and two H2A-H2B heterodimers. The octamer wraps approximately 147 bp of DNA. Post-translationally, monoubiquitination of Lys-121 by the RNF20/40 complex gives a specific tag for epigenetic transcriptional activation and is also prerequisite for histone H3 'Lys-4' and 'Lys-79' methylation. In terms of processing, phosphorylated on Ser-15 during apoptosis; which facilitates apoptotic chromatin condensation.

The protein resides in the nucleus. The protein localises to the chromosome. Functionally, core component of nucleosome. Nucleosomes wrap and compact DNA into chromatin, limiting DNA accessibility to the cellular machineries which require DNA as a template. Histones thereby play a central role in transcription regulation, DNA repair, DNA replication and chromosomal stability. DNA accessibility is regulated via a complex set of post-translational modifications of histones, also called histone code, and nucleosome remodeling. The polypeptide is Histone H2B (Cairina moschata (Muscovy duck)).